A 319-amino-acid chain; its full sequence is Pyrroline-5-carboxylate reductase 1, mitochondrial (319 aa).

Ser-2 is subject to N-acetylserine. NADP(+) contacts are provided by residues 6–11 (IGAGQL) and Ser-34. Ala-8, Gln-10, Leu-11, Ser-34, Asp-36, Asn-56, Val-70, Lys-71, and Ala-97 together coordinate NADPH. NADP(+)-binding positions include Asn-56, 69–72 (AVKP), and 95–97 (CAA). Glu-164 provides a ligand contact to L-proline. Asn-230 lines the NADPH pocket. Residues Ala-237 and Thr-238 each contribute to the L-proline site. Residues Ser-278 and Ser-301 each carry the phosphoserine modification. The segment at 294–319 (SPAGTALSPSGHTKLLPRSLAPAGKD) is disordered.

This sequence belongs to the pyrroline-5-carboxylate reductase family. In terms of assembly, homodecamer; composed of 5 homodimers. Interacts with LTO1.

It is found in the mitochondrion. It catalyses the reaction L-proline + NADP(+) = (S)-1-pyrroline-5-carboxylate + NADPH + 2 H(+). It carries out the reaction L-proline + NAD(+) = (S)-1-pyrroline-5-carboxylate + NADH + 2 H(+). It participates in amino-acid biosynthesis; L-proline biosynthesis; L-proline from L-glutamate 5-semialdehyde: step 1/1. With respect to regulation, subject to competitive inhibition by the reaction product proline. Subject to competitive inhibition by stearoyl coenzyme A. Oxidoreductase that catalyzes the last step in proline biosynthesis, which corresponds to the reduction of pyrroline-5-carboxylate to L-proline using NAD(P)H. At physiologic concentrations, has higher specific activity in the presence of NADH. Involved in the cellular response to oxidative stress. This chain is Pyrroline-5-carboxylate reductase 1, mitochondrial, found in Homo sapiens (Human).